The following is a 270-amino-acid chain: MTVLEDIVAGVREDLATREAATPLAVVKEQALARAGAKSAVDVLRREDAIAVIAEVKRSSPSKGALADIADPAGLAADYEAGGASVVSVLTEQRRFGGSLADLDAVRAAVDVPVLRKDFVVSPYQVWEARAHGADLVLLIVAALEQTVLTSLVERVHSLGMTALVEAHDVGEAHRAIDAGARVLGINARNLHTLEVDRATFAEVVGVVPDGVVKVAESGVRGPHDVLEYARAGADAVLVGESLVTQGNPRGAVADLVAAGAHPALRAVRH.

It belongs to the TrpC family.

The catalysed reaction is 1-(2-carboxyphenylamino)-1-deoxy-D-ribulose 5-phosphate + H(+) = (1S,2R)-1-C-(indol-3-yl)glycerol 3-phosphate + CO2 + H2O. The protein operates within amino-acid biosynthesis; L-tryptophan biosynthesis; L-tryptophan from chorismate: step 4/5. This is Indole-3-glycerol phosphate synthase from Beutenbergia cavernae (strain ATCC BAA-8 / DSM 12333 / CCUG 43141 / JCM 11478 / NBRC 16432 / NCIMB 13614 / HKI 0122).